The primary structure comprises 382 residues: Lipid-A-disaccharide synthase (382 aa).

It belongs to the LpxB family.

It carries out the reaction a lipid X + a UDP-2-N,3-O-bis[(3R)-3-hydroxyacyl]-alpha-D-glucosamine = a lipid A disaccharide + UDP + H(+). Its pathway is bacterial outer membrane biogenesis; LPS lipid A biosynthesis. Functionally, condensation of UDP-2,3-diacylglucosamine and 2,3-diacylglucosamine-1-phosphate to form lipid A disaccharide, a precursor of lipid A, a phosphorylated glycolipid that anchors the lipopolysaccharide to the outer membrane of the cell. In Alkalilimnicola ehrlichii (strain ATCC BAA-1101 / DSM 17681 / MLHE-1), this protein is Lipid-A-disaccharide synthase.